Consider the following 196-residue polypeptide: Holliday junction branch migration complex subunit RuvA (196 aa).

The domain I stretch occupies residues 1 to 63; the sequence is MYDYIKGTLV…DDAHLLFGFH (63 aa). Residues 64–142 form a domain II region; it reads TEDEKEVFLK…ELPAETTNTT (79 aa). The flexible linker stretch occupies residues 143–146; the sequence is ANQT. The domain III stretch occupies residues 147–196; it reads AGNQQLDEAMEALLALGYKATELKKVKAFFEDTNETAEQYIKSALKMLMK.

Belongs to the RuvA family. Homotetramer. Forms an RuvA(8)-RuvB(12)-Holliday junction (HJ) complex. HJ DNA is sandwiched between 2 RuvA tetramers; dsDNA enters through RuvA and exits via RuvB. An RuvB hexamer assembles on each DNA strand where it exits the tetramer. Each RuvB hexamer is contacted by two RuvA subunits (via domain III) on 2 adjacent RuvB subunits; this complex drives branch migration. In the full resolvosome a probable DNA-RuvA(4)-RuvB(12)-RuvC(2) complex forms which resolves the HJ.

It localises to the cytoplasm. In terms of biological role, the RuvA-RuvB-RuvC complex processes Holliday junction (HJ) DNA during genetic recombination and DNA repair, while the RuvA-RuvB complex plays an important role in the rescue of blocked DNA replication forks via replication fork reversal (RFR). RuvA specifically binds to HJ cruciform DNA, conferring on it an open structure. The RuvB hexamer acts as an ATP-dependent pump, pulling dsDNA into and through the RuvAB complex. HJ branch migration allows RuvC to scan DNA until it finds its consensus sequence, where it cleaves and resolves the cruciform DNA. The chain is Holliday junction branch migration complex subunit RuvA from Streptococcus thermophilus (strain ATCC BAA-491 / LMD-9).